Consider the following 235-residue polypeptide: Small ribosomal subunit protein mS23 (235 aa).

Residues 51-71 are disordered; that stretch reads PYPIQHTEPKDRGRAAQRPRN.

Belongs to the mitochondrion-specific ribosomal protein mS23 family. In terms of assembly, component of the mitochondrial small ribosomal subunit.

The protein localises to the mitochondrion. This Chaetomium globosum (strain ATCC 6205 / CBS 148.51 / DSM 1962 / NBRC 6347 / NRRL 1970) (Soil fungus) protein is Small ribosomal subunit protein mS23 (RSM25).